The chain runs to 901 residues: Aconitate hydratase A (901 aa).

[4Fe-4S] cluster is bound by residues cysteine 443, cysteine 509, and cysteine 512.

This sequence belongs to the aconitase/IPM isomerase family. Monomer. The cofactor is [4Fe-4S] cluster.

The enzyme catalyses citrate = D-threo-isocitrate. The catalysed reaction is (2S,3R)-3-hydroxybutane-1,2,3-tricarboxylate = 2-methyl-cis-aconitate + H2O. It functions in the pathway carbohydrate metabolism; tricarboxylic acid cycle; isocitrate from oxaloacetate: step 2/2. Its pathway is organic acid metabolism; propanoate degradation. Functionally, involved in the catabolism of short chain fatty acids (SCFA) via the tricarboxylic acid (TCA)(acetyl degradation route) and probably the 2-methylcitrate cycle I (propionate degradation route). Catalyzes the reversible isomerization of citrate to isocitrate via cis-aconitate. Could catalyze the hydration of 2-methyl-cis-aconitate to yield (2R,3S)-2-methylisocitrate. The apo form of AcnA functions as a RNA-binding regulatory protein. The chain is Aconitate hydratase A (acnA) from Staphylococcus aureus (strain COL).